We begin with the raw amino-acid sequence, 238 residues long: Ubiquinone biosynthesis O-methyltransferase (238 aa).

Residues R40, G59, D80, and M124 each contribute to the S-adenosyl-L-methionine site.

It belongs to the methyltransferase superfamily. UbiG/COQ3 family.

The enzyme catalyses a 3-demethylubiquinol + S-adenosyl-L-methionine = a ubiquinol + S-adenosyl-L-homocysteine + H(+). It catalyses the reaction a 3-(all-trans-polyprenyl)benzene-1,2-diol + S-adenosyl-L-methionine = a 2-methoxy-6-(all-trans-polyprenyl)phenol + S-adenosyl-L-homocysteine + H(+). It functions in the pathway cofactor biosynthesis; ubiquinone biosynthesis. In terms of biological role, O-methyltransferase that catalyzes the 2 O-methylation steps in the ubiquinone biosynthetic pathway. In Ralstonia nicotianae (strain ATCC BAA-1114 / GMI1000) (Ralstonia solanacearum), this protein is Ubiquinone biosynthesis O-methyltransferase.